A 35-amino-acid chain; its full sequence is MEVNILAFIATALFIIIPTAFLLILYVKTASQSDS.

The helical transmembrane segment at 5 to 25 threads the bilayer; that stretch reads ILAFIATALFIIIPTAFLLIL.

This sequence belongs to the PsbM family. As to quaternary structure, PSII is composed of 1 copy each of membrane proteins PsbA, PsbB, PsbC, PsbD, PsbE, PsbF, PsbH, PsbI, PsbJ, PsbK, PsbL, PsbM, PsbT, PsbX, PsbY, PsbZ, Psb30/Ycf12, at least 3 peripheral proteins of the oxygen-evolving complex and a large number of cofactors. It forms dimeric complexes.

The protein resides in the plastid. The protein localises to the chloroplast thylakoid membrane. Its function is as follows. One of the components of the core complex of photosystem II (PSII). PSII is a light-driven water:plastoquinone oxidoreductase that uses light energy to abstract electrons from H(2)O, generating O(2) and a proton gradient subsequently used for ATP formation. It consists of a core antenna complex that captures photons, and an electron transfer chain that converts photonic excitation into a charge separation. This subunit is found at the monomer-monomer interface. In Chara vulgaris (Common stonewort), this protein is Photosystem II reaction center protein M.